Here is a 146-residue protein sequence, read N- to C-terminus: Ribosomal RNA large subunit methyltransferase H (146 aa).

Residues Leu-62, Gly-94, and 113–118 (LGELTL) each bind S-adenosyl-L-methionine.

This sequence belongs to the RNA methyltransferase RlmH family. In terms of assembly, homodimer.

It localises to the cytoplasm. It carries out the reaction pseudouridine(1915) in 23S rRNA + S-adenosyl-L-methionine = N(3)-methylpseudouridine(1915) in 23S rRNA + S-adenosyl-L-homocysteine + H(+). In terms of biological role, specifically methylates the pseudouridine at position 1915 (m3Psi1915) in 23S rRNA. This Deinococcus radiodurans (strain ATCC 13939 / DSM 20539 / JCM 16871 / CCUG 27074 / LMG 4051 / NBRC 15346 / NCIMB 9279 / VKM B-1422 / R1) protein is Ribosomal RNA large subunit methyltransferase H.